We begin with the raw amino-acid sequence, 144 residues long: Large ribosomal subunit protein uL16 (144 aa).

Belongs to the universal ribosomal protein uL16 family. In terms of assembly, part of the 50S ribosomal subunit.

Binds 23S rRNA and is also seen to make contacts with the A and possibly P site tRNAs. The sequence is that of Large ribosomal subunit protein uL16 from Acidobacterium capsulatum (strain ATCC 51196 / DSM 11244 / BCRC 80197 / JCM 7670 / NBRC 15755 / NCIMB 13165 / 161).